The following is a 62-amino-acid chain: 6.7 kDa chloroplast outer envelope membrane protein (62 aa).

The Chloroplast intermembrane portion of the chain corresponds to 1–17; the sequence is MESVAKPATTKEGSAKQ. Residues 18–40 form a helical membrane-spanning segment; it reads AAIVVGVLALGWFAIQVAFIPLF. Topologically, residues 41–62 are cytoplasmic; sequence NKVRGGGSDKKDDDVNAFTPDT.

The protein localises to the plastid. It is found in the chloroplast outer membrane. The protein is 6.7 kDa chloroplast outer envelope membrane protein of Spinacia oleracea (Spinach).